The chain runs to 688 residues: MDGSFVQHSVRVLQELNKQREKGQYCDATLDVGGLVFKAHWSVLACCSHFFQSLYGDGSGGSVVLPAGFAEIFGLLLDFFYTGHLALTSGNRDQVLLAARELRVPEAVELCQSFKPKTSVGQAAGGQSGLGPPASQNVNSHVKEPAGLEEEEVSRTLGLVPRDQEPRGSHSPQRPQLHSPAQSEGPSSLCGKLKQALKPCPLEDKKPEDCKVPPRPLEAEGAQLQGGSNEWEVVVQVEDDGDGDYMSEPEAVLTRRKSNVIRKPCAAEPALSAGSLAAEPAENRKGTAVPVECPTCHKKFLSKYYLKVHNRKHTGEKPFECPKCGKCYFRKENLLEHEARNCMNRSEQVFTCSVCQETFRRRMELRVHMVSHTGEMPYKCSSCSQQFMQKKDLQSHMIKLHGAPKPHACPTCAKCFLSRTELQLHEAFKHRGEKLFVCEECGHRASSRNGLQMHIKAKHRNERPHVCEFCSHAFTQKANLNMHLRTHTGEKPFQCHLCGKTFRTQASLDKHNRTHTGERPFSCEFCEQRFTEKGPLLRHVASRHQEGRPHFCQICGKTFKAVEQLRVHVRRHKGVRKFECTECGYKFTRQAHLRRHMEIHDRVENYNPRQRKLRNLIIEDEKMVVVALQPPAELEVGSAEVIVESLAQGGLASQLPGQRLCAEESFTGPGVLEPSLIITAAVPEDCDT.

In terms of domain architecture, BTB spans 26–89 (CDATLDVGGL…FYTGHLALTS (64 aa)). The disordered stretch occupies residues 119–140 (SVGQAAGGQSGLGPPASQNVNS). Residue K143 forms a Glycyl lysine isopeptide (Lys-Gly) (interchain with G-Cter in SUMO2) linkage. A disordered region spans residues 161-192 (PRDQEPRGSHSPQRPQLHSPAQSEGPSSLCGK). Residues S169, S171, and S179 each carry the phosphoserine modification. Residues 170–186 (HSPQRPQLHSPAQSEGP) show a composition bias toward polar residues. K263 participates in a covalent cross-link: Glycyl lysine isopeptide (Lys-Gly) (interchain with G-Cter in SUMO2). The C2H2-type 1 zinc-finger motif lies at 291 to 313 (VECPTCHKKFLSKYYLKVHNRKH). The Zn(2+) site is built by C293, C296, H309, H313, C321, C324, H337, C342, C352, C355, H368, H372, C380, C383, H396, and H401. The CCHC-type zinc finger occupies 319 to 344 (FECPKCGKCYFRKENLLEHEARNCMN). C2H2-type zinc fingers lie at residues 350–372 (FTCS…MVSH), 378–401 (YKCS…IKLH), 407–430 (HACP…AFKH), 436–459 (FVCE…KAKH), 465–487 (HVCE…LRTH), 493–515 (FQCH…NRTH), 521–544 (FSCE…ASRH), 550–572 (HFCQ…VRRH), and 578–600 (FECT…MEIH). Residues C552, C555, H568, C580, C583, H596, and H600 each coordinate Zn(2+).

It belongs to the krueppel C2H2-type zinc-finger protein family. In terms of assembly, interacts with EP300. Detected in adrenal gland and neuroblastoma.

The protein resides in the nucleus. It is found in the chromosome. The protein localises to the telomere. In terms of biological role, plays a critical role in transcriptional regulation and chromatin remodeling. Acts as a regulator of telomere length. Directly binds the telomeric double-stranded 5'-TTAGGG-3' repeat. Preferentially binds to telomeres that have a low concentration of shelterin complex and acts as a regulator of telomere length by initiating telomere trimming, a process that prevents the accumulation of aberrantly long telomeres. Also acts as a transcription regulator that binds to promoter regions. Regulates expression of a small subset of genes, including MTFP1. Acts as a negative regulator of cell proliferation by specifically activating expression of ARF, a tumor suppressor isoform of CDKN2A. Acts as a transcription regulator of CIITA, the major factor regulating MHC class II gene expression. In addition, regulates cellular m6A/m6Am methylation on RNA by facilitating the recruitment of the RNA demethylase, FTO, to target mRNAs. This chain is Zinc finger and BTB domain-containing protein 48, found in Homo sapiens (Human).